The primary structure comprises 85 residues: MAHKKAGGSTRNGRDSEAKRLGVKRFGGEAVLAGSIIVRQRGTKFHAGTNVGCGRDHTLFALTDGKVKFEVKGPKNRKFISIVAE.

The segment at 1 to 20 is disordered; sequence MAHKKAGGSTRNGRDSEAKR.

It belongs to the bacterial ribosomal protein bL27 family.

The chain is Large ribosomal subunit protein bL27 from Klebsiella pneumoniae (strain 342).